Consider the following 505-residue polypeptide: MAQVINTNSLSLLTQNNLNKSQSSLSSAIERLSSGLRINSAKDDAAGQAIANRFTSNIKGLTQASRNANDGISIAQTTEGALNEINNNLQRVRELSVQATNGTNSDSDLKSIQDEIQQRLEEIDRVSNQTQFNGVKVLSQDNQMKIQVGANDGETITIDLQKIDVKSLGLDGFNVNGPKEATVGDLKSSFKNVTGYDTYAAGADKYRVDINSGAVVTDAAAPDKVYVNAANGQLTTDDAENNTAVDLFKTTKSTAGTAEAKAIAGAIKGGKEGDTFDYKGVTFTIDTKTGDDGNGKVSTTINGEKVTLTVADIATGATDVNAATLQSSKNVYTSVVNGQFTFDDKTKNESAKLSDLEANNAVKGESKITVNGAEYTANATGDKITLAGKTMFIDKTASGVSTLINEDAAAAKKSTANPLASIDSALSKVDAVRSSLGAIQNRFDSAITNLGNTVTNLNSARSRIEDADYATEVSNMSKAQILQQAGTSVLAQANQVPQNVLSLLR.

Belongs to the bacterial flagellin family.

It is found in the secreted. It localises to the bacterial flagellum. Functionally, flagellin is the subunit protein which polymerizes to form the filaments of bacterial flagella. The protein is Flagellin (fliC) of Salmonella enteritidis.